The primary structure comprises 140 residues: Fatty acid-binding protein 12 (140 aa).

A fatty acid contacts are provided by residues arginine 107 and 127–129; that span reads RTY.

It belongs to the calycin superfamily. Fatty-acid binding protein (FABP) family. Expressed in a number of retinoblastoma cell lines.

May play a role in lipid transport. This chain is Fatty acid-binding protein 12 (FABP12), found in Homo sapiens (Human).